We begin with the raw amino-acid sequence, 362 residues long: Phosphoserine aminotransferase (362 aa).

L-glutamate is bound at residue Arg-41. Residues 75–76, Phe-101, Thr-152, Asp-173, and Gln-196 contribute to the pyridoxal 5'-phosphate site; that span reads GS. Lys-197 bears the N6-(pyridoxal phosphate)lysine mark. Residue 239 to 240 coordinates pyridoxal 5'-phosphate; the sequence is NT.

This sequence belongs to the class-V pyridoxal-phosphate-dependent aminotransferase family. SerC subfamily. In terms of assembly, homodimer. It depends on pyridoxal 5'-phosphate as a cofactor.

It localises to the cytoplasm. It carries out the reaction O-phospho-L-serine + 2-oxoglutarate = 3-phosphooxypyruvate + L-glutamate. The catalysed reaction is 4-(phosphooxy)-L-threonine + 2-oxoglutarate = (R)-3-hydroxy-2-oxo-4-phosphooxybutanoate + L-glutamate. It functions in the pathway amino-acid biosynthesis; L-serine biosynthesis; L-serine from 3-phospho-D-glycerate: step 2/3. Its function is as follows. Catalyzes the reversible conversion of 3-phosphohydroxypyruvate to phosphoserine and of 3-hydroxy-2-oxo-4-phosphonooxybutanoate to phosphohydroxythreonine. This is Phosphoserine aminotransferase from Leuconostoc mesenteroides subsp. mesenteroides (strain ATCC 8293 / DSM 20343 / BCRC 11652 / CCM 1803 / JCM 6124 / NCDO 523 / NBRC 100496 / NCIMB 8023 / NCTC 12954 / NRRL B-1118 / 37Y).